Reading from the N-terminus, the 345-residue chain is Mycothiol acetyltransferase (345 aa).

N-acetyltransferase domains follow at residues 6–149 and 164–345; these read DTYE…KAME and FEVL…RGRL. Glu39 provides a ligand contact to 1D-myo-inositol 2-(L-cysteinylamino)-2-deoxy-alpha-D-glucopyranoside. An acetyl-CoA-binding site is contributed by 76–78; it reads LAV. Glu198, Lys261, and Glu277 together coordinate 1D-myo-inositol 2-(L-cysteinylamino)-2-deoxy-alpha-D-glucopyranoside. Residues 281 to 283 and 288 to 294 each bind acetyl-CoA; these read VCL and RGRGLGQ. Tyr315 lines the 1D-myo-inositol 2-(L-cysteinylamino)-2-deoxy-alpha-D-glucopyranoside pocket.

Belongs to the acetyltransferase family. MshD subfamily. Monomer.

The enzyme catalyses 1D-myo-inositol 2-(L-cysteinylamino)-2-deoxy-alpha-D-glucopyranoside + acetyl-CoA = mycothiol + CoA + H(+). Functionally, catalyzes the transfer of acetyl from acetyl-CoA to desacetylmycothiol (Cys-GlcN-Ins) to form mycothiol. This Corynebacterium jeikeium (strain K411) protein is Mycothiol acetyltransferase.